The primary structure comprises 1082 residues: SURP and G-patch domain-containing protein 2 (1082 aa).

Position 7 is a phosphothreonine (T7). A disordered region spans residues 65–97; it reads LSGSVAHSRDAGREGLRSDVFPGPSFRSSNPSI. Positions 71-81 are enriched in basic and acidic residues; it reads HSRDAGREGLR. Residues S96 and S224 each carry the phosphoserine modification. Residue K228 forms a Glycyl lysine isopeptide (Lys-Gly) (interchain with G-Cter in SUMO2) linkage. Phosphothreonine is present on T275. A Phosphoserine modification is found at S277. Residue K305 forms a Glycyl lysine isopeptide (Lys-Gly) (interchain with G-Cter in SUMO2) linkage. Residues S315, S573, and S603 each carry the phosphoserine modification. Residues 590–633 form an SURP motif 1 repeat; the sequence is IDQLVKRVIEGSLSPKERTLLKEDPAYWFLSDENSLEYKYYKLK. K650 is covalently cross-linked (Glycyl lysine isopeptide (Lys-Gly) (interchain with G-Cter in SUMO2)). Positions 694 to 779 are disordered; that stretch reads RRATTGTQTL…QTSSPCPSAD (86 aa). The segment covering 697–708 has biased composition (low complexity); the sequence is TTGTQTLLSSGT. Basic and acidic residues predominate over residues 727–738; the sequence is LPDRNDAAKDCP. S754 and S757 each carry phosphoserine. An SURP motif 2 repeat occupies 787–830; the sequence is TAEKLARFVAQVGPEIEQFSIENSTDNPDLWFLHDQNSSAFKFY. 3 disordered regions span residues 849 to 930, 982 to 1002, and 1030 to 1061; these read NLHT…EAAE, RIAYDRPRGRPMSKKKKPKDL, and LGSLGKGIREPVSVGTPSEGEGLGADGQEHKE. S863 bears the Phosphoserine mark. 2 stretches are compositionally biased toward acidic residues: residues 868 to 877 and 885 to 904; these read MEGEAEFEDE and LESPEVMPEEEDEDDEDGGE. The segment covering 990-999 has biased composition (basic residues); the sequence is GRPMSKKKKP. The Nuclear localization signal signature appears at 995 to 1000; the sequence is KKKKPK. Residues 1011–1057 form the G-patch domain; that stretch reads DKNLGFQMLQKMGWKEGHGLGSLGKGIREPVSVGTPSEGEGLGADGQ.

Detected in adult testis, and in fetal brain and kidney.

The protein localises to the nucleus. In terms of biological role, may play a role in mRNA splicing. The protein is SURP and G-patch domain-containing protein 2 (SUGP2) of Homo sapiens (Human).